A 544-amino-acid polypeptide reads, in one-letter code: Chaperonin GroEL (544 aa).

Residues 29 to 32 (TMGP), Lys-50, 86 to 90 (DGTTT), Gly-414, 477 to 479 (NAV), and Asp-493 each bind ATP.

It belongs to the chaperonin (HSP60) family. In terms of assembly, forms a cylinder of 14 subunits composed of two heptameric rings stacked back-to-back. Interacts with the co-chaperonin GroES.

It localises to the cytoplasm. The catalysed reaction is ATP + H2O + a folded polypeptide = ADP + phosphate + an unfolded polypeptide.. In terms of biological role, together with its co-chaperonin GroES, plays an essential role in assisting protein folding. The GroEL-GroES system forms a nano-cage that allows encapsulation of the non-native substrate proteins and provides a physical environment optimized to promote and accelerate protein folding. This is Chaperonin GroEL from Campylobacter curvus (strain 525.92).